A 525-amino-acid chain; its full sequence is uncharacterized protein (525 aa).

Positions 1-21 are cleaved as a signal peptide; it reads MLECLSALLVLFAGGGGSVLA. Over 22–448 the chain is Extracellular; that stretch reads AVQSKTVADP…ISAASQLDER (427 aa). The interval 242–264 is disordered; that stretch reads KVSSENCSKDTDDKSGSKKERNT. A helical transmembrane segment spans residues 449 to 469; sequence IFIFTAITVSITTLMMLGFSY. Residues 470–525 are Cytoplasmic-facing; sequence RSRVSFRDHSIDDSDDDNDWSDDEVEFDEEYFYSLPVSIPEKGISLDKMAQQLGVE.

Its subcellular location is the membrane. This is an uncharacterized protein from Saccharomyces cerevisiae (strain RM11-1a) (Baker's yeast).